Consider the following 92-residue polypeptide: Large ribosomal subunit protein bL25 (92 aa).

This sequence belongs to the bacterial ribosomal protein bL25 family. In terms of assembly, part of the 50S ribosomal subunit; part of the 5S rRNA/L5/L18/L25 subcomplex. Contacts the 5S rRNA. Binds to the 5S rRNA independently of L5 and L18.

In terms of biological role, this is one of the proteins that binds to the 5S RNA in the ribosome where it forms part of the central protuberance. This chain is Large ribosomal subunit protein bL25, found in Vibrio atlanticus (strain LGP32) (Vibrio splendidus (strain Mel32)).